A 277-amino-acid chain; its full sequence is Phosphatidylglycerol--prolipoprotein diacylglyceryl transferase (277 aa).

Helical transmembrane passes span 22–42 (ISIR…YIVV), 59–79 (LFFY…CLFY), 107–127 (GYEG…LWLY), and 133–153 (MNYM…ACFI). Arginine 154 contributes to the a 1,2-diacyl-sn-glycero-3-phospho-(1'-sn-glycerol) binding site. The next 3 helical transmembrane spans lie at 186 to 206 (PAQL…MFLY), 216 to 236 (GFFF…VEFL), and 251 to 271 (MGQW…FFYG).

This sequence belongs to the Lgt family.

It localises to the cell inner membrane. It catalyses the reaction L-cysteinyl-[prolipoprotein] + a 1,2-diacyl-sn-glycero-3-phospho-(1'-sn-glycerol) = an S-1,2-diacyl-sn-glyceryl-L-cysteinyl-[prolipoprotein] + sn-glycerol 1-phosphate + H(+). Its pathway is protein modification; lipoprotein biosynthesis (diacylglyceryl transfer). Catalyzes the transfer of the diacylglyceryl group from phosphatidylglycerol to the sulfhydryl group of the N-terminal cysteine of a prolipoprotein, the first step in the formation of mature lipoproteins. The sequence is that of Phosphatidylglycerol--prolipoprotein diacylglyceryl transferase from Bacteroides fragilis (strain ATCC 25285 / DSM 2151 / CCUG 4856 / JCM 11019 / LMG 10263 / NCTC 9343 / Onslow / VPI 2553 / EN-2).